The following is a 165-amino-acid chain: LOB domain-containing protein 3 (165 aa).

One can recognise an LOB domain in the interval 13-115 (SPCAGCKLLR…TQLAFAQAEL (103 aa)).

This sequence belongs to the LOB domain-containing protein family. In terms of tissue distribution, expressed in young shoots, roots, stems, leaves and flowers. At the bases of lateral organs formed from vegetative, inflorescence, and floral meristems.

It is found in the nucleus. The protein is LOB domain-containing protein 3 (LBD3) of Arabidopsis thaliana (Mouse-ear cress).